A 220-amino-acid polypeptide reads, in one-letter code: Ribose-5-phosphate isomerase A (220 aa).

Substrate is bound by residues 28–31, 81–84, and 94–97; these read TGST, DGAD, and KGGG. The active-site Proton acceptor is the Glu103. Lys121 contributes to the substrate binding site.

The protein belongs to the ribose 5-phosphate isomerase family. In terms of assembly, homodimer.

It catalyses the reaction aldehydo-D-ribose 5-phosphate = D-ribulose 5-phosphate. The protein operates within carbohydrate degradation; pentose phosphate pathway; D-ribose 5-phosphate from D-ribulose 5-phosphate (non-oxidative stage): step 1/1. Catalyzes the reversible conversion of ribose-5-phosphate to ribulose 5-phosphate. The chain is Ribose-5-phosphate isomerase A from Shewanella baltica (strain OS223).